The chain runs to 428 residues: Glutamate-1-semialdehyde 2,1-aminomutase (428 aa).

The residue at position 265 (K265) is an N6-(pyridoxal phosphate)lysine.

Belongs to the class-III pyridoxal-phosphate-dependent aminotransferase family. HemL subfamily. Homodimer. Pyridoxal 5'-phosphate is required as a cofactor.

The protein localises to the cytoplasm. It carries out the reaction (S)-4-amino-5-oxopentanoate = 5-aminolevulinate. It participates in porphyrin-containing compound metabolism; protoporphyrin-IX biosynthesis; 5-aminolevulinate from L-glutamyl-tRNA(Glu): step 2/2. This chain is Glutamate-1-semialdehyde 2,1-aminomutase, found in Shewanella loihica (strain ATCC BAA-1088 / PV-4).